Reading from the N-terminus, the 341-residue chain is ATPase GET3 (341 aa).

34-41 contacts ATP; sequence KGGVGKTT. Residue aspartate 63 is part of the active site. 2 residues coordinate ATP: glutamate 245 and asparagine 272. Residues cysteine 283 and cysteine 286 each coordinate Zn(2+).

Belongs to the arsA ATPase family. As to quaternary structure, homodimer.

Its subcellular location is the cytoplasm. The protein localises to the endoplasmic reticulum. ATPase required for the post-translational delivery of tail-anchored (TA) proteins to the endoplasmic reticulum. Recognizes and selectively binds the transmembrane domain of TA proteins in the cytosol. This complex then targets to the endoplasmic reticulum by membrane-bound receptors, where the tail-anchored protein is released for insertion. This process is regulated by ATP binding and hydrolysis. ATP binding drives the homodimer towards the closed dimer state, facilitating recognition of newly synthesized TA membrane proteins. ATP hydrolysis is required for insertion. Subsequently, the homodimer reverts towards the open dimer state, lowering its affinity for the membrane-bound receptor, and returning it to the cytosol to initiate a new round of targeting. This Ajellomyces capsulatus (strain G186AR / H82 / ATCC MYA-2454 / RMSCC 2432) (Darling's disease fungus) protein is ATPase GET3.